The sequence spans 117 residues: MGFWKFPPFLVLSILVLYQAGMFHTAPVRLPLESSFDSATLTEEEVSLLLVAMVKDYVQMKATVLEQESEDFSITAQEKSCNTASCVTHKMTGWLSRSGSVAKNNFMPTNVDSKILG.

The first 25 residues, Met-1 to Thr-25, serve as a signal peptide directing secretion. The propeptide occupies Ala-26–Lys-79. Cys-81 and Cys-86 are joined by a disulfide.

The protein belongs to the calcitonin family. As to expression, mainly expressed in the thyroid gland and CNS. Found in the nerve cells of the cerebrum, hippocampus, hypothalamus, pons/midbrain and thalamus. Also detected in the glia-like cells of pons/midbrain and in meninx of tactus opticus.

Its subcellular location is the secreted. This is Calcitonin receptor-stimulating peptide 2 (CRSP2) from Sus scrofa (Pig).